Consider the following 384-residue polypeptide: Lipid-A-disaccharide synthase 1 (384 aa).

The protein belongs to the LpxB family.

It carries out the reaction a lipid X + a UDP-2-N,3-O-bis[(3R)-3-hydroxyacyl]-alpha-D-glucosamine = a lipid A disaccharide + UDP + H(+). The protein operates within bacterial outer membrane biogenesis; LPS lipid A biosynthesis. Its function is as follows. Condensation of UDP-2,3-diacylglucosamine and 2,3-diacylglucosamine-1-phosphate to form lipid A disaccharide, a precursor of lipid A, a phosphorylated glycolipid that anchors the lipopolysaccharide to the outer membrane of the cell. This is Lipid-A-disaccharide synthase 1 from Legionella pneumophila (strain Paris).